Here is a 350-residue protein sequence, read N- to C-terminus: Erythronate-4-phosphate dehydrogenase (350 aa).

Positions 45 and 66 each coordinate substrate. NAD(+) contacts are provided by residues 124 to 125 (QV), aspartate 144, 203 to 205 (ASR), and aspartate 226. The active site involves arginine 205. The active site involves glutamate 231. The active-site Proton donor is histidine 248. Position 251 (glycine 251) interacts with NAD(+).

This sequence belongs to the D-isomer specific 2-hydroxyacid dehydrogenase family. PdxB subfamily. In terms of assembly, homodimer.

It localises to the cytoplasm. The enzyme catalyses 4-phospho-D-erythronate + NAD(+) = (R)-3-hydroxy-2-oxo-4-phosphooxybutanoate + NADH + H(+). It participates in cofactor biosynthesis; pyridoxine 5'-phosphate biosynthesis; pyridoxine 5'-phosphate from D-erythrose 4-phosphate: step 2/5. Functionally, catalyzes the oxidation of erythronate-4-phosphate to 3-hydroxy-2-oxo-4-phosphonooxybutanoate. This Legionella pneumophila (strain Lens) protein is Erythronate-4-phosphate dehydrogenase.